We begin with the raw amino-acid sequence, 331 residues long: Adenosine deaminase (331 aa).

The Zn(2+) site is built by histidine 12 and histidine 14. Histidine 14, aspartate 16, and glycine 170 together coordinate substrate. Histidine 197 serves as a coordination point for Zn(2+). Residue glutamate 200 is the Proton donor of the active site. Aspartate 278 contacts Zn(2+).

The protein belongs to the metallo-dependent hydrolases superfamily. Adenosine and AMP deaminases family. Adenosine deaminase subfamily. Requires Zn(2+) as cofactor.

It catalyses the reaction adenosine + H2O + H(+) = inosine + NH4(+). The catalysed reaction is 2'-deoxyadenosine + H2O + H(+) = 2'-deoxyinosine + NH4(+). Catalyzes the hydrolytic deamination of adenosine and 2-deoxyadenosine. The polypeptide is Adenosine deaminase (Shewanella woodyi (strain ATCC 51908 / MS32)).